The primary structure comprises 244 residues: Transcription initiation factor TFIID subunit 14 (244 aa).

The 134-residue stretch at 1-134 folds into the YEATS domain; that stretch reads MVATVKRTIR…PLLTEELAKS (134 aa). 2 acylated histone binding regions span residues 59 to 61 and 81 to 83; these read HPT and WGG. The interval 133-169 is disordered; sequence KSGSTEETTANTGTIGKRRTTTNTTAEPKAKRAKTGS. Residues 143–157 are compositionally biased toward low complexity; the sequence is NTGTIGKRRTTTNTT. A Glycyl lysine isopeptide (Lys-Gly) (interchain with G-Cter in ubiquitin) cross-link involves residue K181.

The protein belongs to the TAF14 family. In terms of assembly, the 1.2 MDa TFIID complex is composed of TATA binding protein (TBP) and the 14 TBP-associated factors. One copy of each TAF1, TAF2, TAF3, TAF7, TAF8, TAF11, TAF13, two copies of each TAF4, TAF5, TAF6, TAF9, TAF10, TAF12, and three copies of TAF14. TFIIF is composed of three different subunits: TFG1/RAP74, TFG2/RAP30 and TAF14. Component of the SWI/SNF global transcription activator complex. The 1.14 MDa SWI/SNF complex is composed of 11 different subunits: one copy each of SWI1, SNF2/SWI2, SNF5, SNF12/SWP73, ARP7/SWP61, ARP9/SWP59; two copies each of SWI3, SNF6, SNF11, SWP82; and three copies of TAF14/SWP29. Component of the chromatin-remodeling INO80 complex, at least composed of ARP4, ARP5, ARP8, RVB1, RVB2, TAF14, NHP10, IES1, IES3, IES4, IES6, ACT1, IES2, IES5 and INO80. Component of the NuA3 histone acetyltransferase (HAT) complex. The NuA3 HAT complex has 2 functionally distinct forms that participate in transcription. The NuA3b HAT complex contains an additional subunit, PDP3.

The protein localises to the nucleus. Functions as a component of the DNA-binding general transcription factor complex TFIID, the RNA polymerase II associated general transcription factor complex TFIIF, and the chromatin-remodeling complex SWI/SNF. Binding of TFIID to a promoter (with or without TATA element) is the initial step in preinitiation complex (PIC) formation. TFIID plays a key role in the regulation of gene expression by RNA polymerase II through different activities such as transcription activator interaction, core promoter recognition and selectivity, TFIIA and TFIIB interaction, chromatin modification (histone acetylation by TAF1), facilitation of DNA opening and initiation of transcription. TFIIF is essential for the initiation of transcription by RNA polymerase II. TFIIF functions include the recruitment of RNA polymerase II to the promoter bound DNA-TBP-TFIIB complex, decreasing the affinity of RNA polymerase II for non-specific DNA, allowing for the subsequent recruitment of TFIIE and TFIIH, and facilitating RNA polymerase II elongation. TAF14 acts as a chromatin reader that specifically recognizes and binds histones that are acylated. Recognizes and binds histone H3 acetylated or crotonylated at 'Lys-9' (H3K9ac and H3K9cr, respectively), with some preference for crotonylated lysine. Component of the SWI/SNF complex, an ATP-dependent chromatin-remodeling complex, is required for the positive and negative regulation of gene expression of a large number of genes. It changes chromatin structure by altering DNA-histone contacts within a nucleosome, leading eventually to a change in nucleosome position, thus facilitating or repressing binding of gene-specific transcription factors. Component of the NuA3 histone acetyltransferase complex. The NuA3 HAT complex has 2 functionally distinct forms. NuA3a binds H3K4me3, through the PHD finger of YNG1, and acetylates H3K14 at the promoter region of actively transcribed genes to promote transcription initiation. NuA3b binds H3K36me3 at the coding regions of actively transcribed genes, through the PWWP domain of PDP3, and coordinates transcription elongation. Does not bind DNA. This chain is Transcription initiation factor TFIID subunit 14 (TAF14), found in Saccharomyces cerevisiae (strain ATCC 204508 / S288c) (Baker's yeast).